The following is a 422-amino-acid chain: UDP-N-acetylglucosamine 1-carboxyvinyltransferase (422 aa).

22–23 (KN) contacts phosphoenolpyruvate. Residue arginine 93 coordinates UDP-N-acetyl-alpha-D-glucosamine. The active-site Proton donor is the cysteine 117. Position 117 is a 2-(S-cysteinyl)pyruvic acid O-phosphothioketal (cysteine 117). UDP-N-acetyl-alpha-D-glucosamine contacts are provided by residues 122–126 (RPVDQ), aspartate 305, and isoleucine 327.

This sequence belongs to the EPSP synthase family. MurA subfamily.

It localises to the cytoplasm. The catalysed reaction is phosphoenolpyruvate + UDP-N-acetyl-alpha-D-glucosamine = UDP-N-acetyl-3-O-(1-carboxyvinyl)-alpha-D-glucosamine + phosphate. It functions in the pathway cell wall biogenesis; peptidoglycan biosynthesis. Functionally, cell wall formation. Adds enolpyruvyl to UDP-N-acetylglucosamine. In Bordetella petrii (strain ATCC BAA-461 / DSM 12804 / CCUG 43448), this protein is UDP-N-acetylglucosamine 1-carboxyvinyltransferase.